The following is a 385-amino-acid chain: UPF0284 protein A9601_04941 (385 aa).

Belongs to the UPF0284 family.

The chain is UPF0284 protein A9601_04941 from Prochlorococcus marinus (strain AS9601).